Consider the following 397-residue polypeptide: Elongation factor Tu (397 aa).

Positions 10 to 207 (KPHVNIGTIG…AVDESIPDPV (198 aa)) constitute a tr-type G domain. A G1 region spans residues 19–26 (GHVDHGKT). 19-26 (GHVDHGKT) serves as a coordination point for GTP. Thr-26 serves as a coordination point for Mg(2+). The tract at residues 63-67 (GITIN) is G2. Residues 84 to 87 (DAPG) form a G3 region. GTP is bound by residues 84 to 88 (DAPGH) and 139 to 142 (NKAD). The G4 stretch occupies residues 139-142 (NKAD). The G5 stretch occupies residues 177–179 (SGL).

It belongs to the TRAFAC class translation factor GTPase superfamily. Classic translation factor GTPase family. EF-Tu/EF-1A subfamily. As to quaternary structure, monomer.

The protein resides in the cytoplasm. The enzyme catalyses GTP + H2O = GDP + phosphate + H(+). Its function is as follows. GTP hydrolase that promotes the GTP-dependent binding of aminoacyl-tRNA to the A-site of ribosomes during protein biosynthesis. This chain is Elongation factor Tu, found in Tropheryma whipplei (strain TW08/27) (Whipple's bacillus).